Consider the following 406-residue polypeptide: L-cysteine:1D-myo-inositol 2-amino-2-deoxy-alpha-D-glucopyranoside ligase (406 aa).

Cys45 provides a ligand contact to Zn(2+). Residues 45 to 48 (CGIT), Thr60, and 83 to 85 (NIT) each bind L-cysteinyl-5'-AMP. The 'HIGH' region motif lies at 47–57 (ITPYDATHMGH). Residues 185 to 190 (ERGGDP) carry the 'ERGGDP' region motif. An L-cysteinyl-5'-AMP-binding site is contributed by Trp225. Zn(2+) is bound at residue Cys229. 247–249 (GSD) lines the L-cysteinyl-5'-AMP pocket. His254 contributes to the Zn(2+) binding site. Val281 lines the L-cysteinyl-5'-AMP pocket. The 'KMSKS' region signature appears at 287–291 (KMSKS).

This sequence belongs to the class-I aminoacyl-tRNA synthetase family. MshC subfamily. Monomer. The cofactor is Zn(2+).

The catalysed reaction is 1D-myo-inositol 2-amino-2-deoxy-alpha-D-glucopyranoside + L-cysteine + ATP = 1D-myo-inositol 2-(L-cysteinylamino)-2-deoxy-alpha-D-glucopyranoside + AMP + diphosphate + H(+). Functionally, catalyzes the ATP-dependent condensation of GlcN-Ins and L-cysteine to form L-Cys-GlcN-Ins. The polypeptide is L-cysteine:1D-myo-inositol 2-amino-2-deoxy-alpha-D-glucopyranoside ligase (Kribbella flavida (strain DSM 17836 / JCM 10339 / NBRC 14399)).